The following is an 891-amino-acid chain: Dynein axonemal intermediate chain 3 (891 aa).

Basic residues predominate over residues M1–P16. The segment at M1–E27 is disordered. WD repeat units lie at residues E395–E435, G477–P533, I670–L709, and C713–A753. Residues H817–D861 are a coiled coil.

In terms of assembly, interacts with ACTR2; this interaction reduces binding of the Arp2/3 complex to the VCA domain of nucleation promoting factors. Part of the multisubunit axonemal dynein complex formed at least of two heavy chains and a number of intermediate and light chains. Found in a associated with the catalytic heavy chain DNAH2, the intermediate chain DNAI4, and the light chain DYNLT1.

The protein resides in the cytoplasm. Functionally, acts as a negative regulator of cell migration, invasion, and metastasis downstream of p53/TP53, through inhibition of Arp2/3 complex-mediated actin polymerization. Via its association with the multisubunit axonemal dynein complex, is potentially involved in the regulation of cilia function. May play a role in osteogenesis of dental tissue-derived mesenchymal stem cells. This Macaca fascicularis (Crab-eating macaque) protein is Dynein axonemal intermediate chain 3 (DNAI3).